Consider the following 311-residue polypeptide: Acetyl-coenzyme A carboxylase carboxyl transferase subunit alpha (311 aa).

Residues 36–286 enclose the CoA carboxyltransferase C-terminal domain; that stretch reads ELKKEVERVY…VNYFLKSLEE (251 aa).

It belongs to the AccA family. As to quaternary structure, acetyl-CoA carboxylase is a heterohexamer composed of biotin carboxyl carrier protein (AccB), biotin carboxylase (AccC) and two subunits each of ACCase subunit alpha (AccA) and ACCase subunit beta (AccD).

Its subcellular location is the cytoplasm. The enzyme catalyses N(6)-carboxybiotinyl-L-lysyl-[protein] + acetyl-CoA = N(6)-biotinyl-L-lysyl-[protein] + malonyl-CoA. Its pathway is lipid metabolism; malonyl-CoA biosynthesis; malonyl-CoA from acetyl-CoA: step 1/1. Its function is as follows. Component of the acetyl coenzyme A carboxylase (ACC) complex. First, biotin carboxylase catalyzes the carboxylation of biotin on its carrier protein (BCCP) and then the CO(2) group is transferred by the carboxyltransferase to acetyl-CoA to form malonyl-CoA. The protein is Acetyl-coenzyme A carboxylase carboxyl transferase subunit alpha of Wolinella succinogenes (strain ATCC 29543 / DSM 1740 / CCUG 13145 / JCM 31913 / LMG 7466 / NCTC 11488 / FDC 602W) (Vibrio succinogenes).